The chain runs to 753 residues: Catalase-peroxidase (753 aa).

Residues 91 to 243 (WHSAGTYRIG…LGAVQMGLIY (153 aa)) constitute a cross-link (tryptophyl-tyrosyl-methioninium (Trp-Tyr) (with M-269)). Histidine 92 (proton acceptor) is an active-site residue. A cross-link (tryptophyl-tyrosyl-methioninium (Tyr-Met) (with W-91)) is located at residues 243 to 269 (YVNPEGPDGNPDPLAAAHDIRETFARM). Residue histidine 284 participates in heme b binding.

The protein belongs to the peroxidase family. Peroxidase/catalase subfamily. In terms of assembly, homodimer or homotetramer. Requires heme b as cofactor. Post-translationally, formation of the three residue Trp-Tyr-Met cross-link is important for the catalase, but not the peroxidase activity of the enzyme.

The enzyme catalyses H2O2 + AH2 = A + 2 H2O. It catalyses the reaction 2 H2O2 = O2 + 2 H2O. Functionally, bifunctional enzyme with both catalase and broad-spectrum peroxidase activity. In Paraburkholderia xenovorans (strain LB400), this protein is Catalase-peroxidase.